A 290-amino-acid chain; its full sequence is MNFQDVILKLQDFWSDYGCCIVQPLDIEVGAGTFNPSTFFRVIGPEPWNTAYVEPSRRPTDGRYGENPNRLQHYFQFQVILKPSPDDVQDLYLKSLEVIGIDAKEHDIRFVEDDWESPTLGAWGLGWEVWLNGMEVTQFTYFQQVGGIDLKPVSVELTYGLERLCMYLQGVESVYDLKWNDKVTYGQIFYQNEVEQSKYNFELSDASMLLDLFDKYEAESKKLCEEGLPRPAYEYCLKCSHTFNMLDARGAISITERATYIGRVRNLASAAAKLYAEERENLNYPMLDND.

It belongs to the class-II aminoacyl-tRNA synthetase family. In terms of assembly, tetramer of two alpha and two beta subunits.

It localises to the cytoplasm. The catalysed reaction is tRNA(Gly) + glycine + ATP = glycyl-tRNA(Gly) + AMP + diphosphate. This is Glycine--tRNA ligase alpha subunit from Maridesulfovibrio salexigens (strain ATCC 14822 / DSM 2638 / NCIMB 8403 / VKM B-1763) (Desulfovibrio salexigens).